Consider the following 837-residue polypeptide: Enterin neuropeptides (837 aa).

The signal sequence occupies residues 1–25; that stretch reads MAKHDVTVMTLLLVVCALHVFDAQG. A propeptide spanning residues 26–47 is cleaved from the precursor; that stretch reads TDVKLNDGFLRSGIMNIPFQRR. Valine 57 is modified (valine amide). Positions 61 to 134 are excised as a propeptide; it reads SGFQSPVSPS…ENKRFSKENE (74 aa). Valine 146 carries the post-translational modification Valine amide. Positions 150 to 178 are excised as a propeptide; that stretch reads MDLSALEKELIAKLKAADLLSPLETEAPG. Leucine 190 bears the Leucine amide mark. A propeptide spanning residues 194-201 is cleaved from the precursor; the sequence is MPVDVFPR. The residue at position 211 (valine 211) is a Valine amide. Residues 215–234 constitute a propeptide that is removed on maturation; that stretch reads SGNGENYFDDLDTFGDISQR. The residue at position 244 (valine 244) is a Valine amide. Residues 248-266 constitute a propeptide that is removed on maturation; the sequence is GNTDFSRNPLARLSQVQNR. Valine 276 carries the post-translational modification Valine amide. Positions 280 to 285 are excised as a propeptide; it reads SVHNIV. Valine 297 is subject to Valine amide. Positions 301–325 are excised as a propeptide; that stretch reads DFEDASEGLDEEEGDIDGYSDDLDV. 18 positions are modified to valine amide: valine 336, valine 348, valine 360, valine 372, valine 384, valine 396, valine 408, valine 420, valine 432, valine 444, valine 456, valine 468, valine 480, valine 492, valine 504, valine 516, valine 528, and valine 540. The propeptide occupies 544 to 595; that stretch reads ELGEDEINFLKEVDAADISRQLAEEDEKEAMVSVDDKETLSNEEDASEDDFE. The disordered stretch occupies residues 567–594; the sequence is EEDEKEAMVSVDDKETLSNEEDASEDDF. Over residues 584–593 the composition is skewed to acidic residues; that stretch reads SNEEDASEDD. Pyrrolidone carboxylic acid (Glu); in form ENl' is present on glutamate 598. Valine 606 is subject to Valine amide. Positions 610-627 are excised as a propeptide; the sequence is DEEGDMGVEMEEEMESEK. Leucine 637 is subject to Leucine amide. At glutamine 641 the chain carries Pyrrolidone carboxylic acid. A Valine amide modification is found at valine 649. Glutamine 653 bears the Pyrrolidone carboxylic acid mark. Valine amide is present on residues valine 661 and valine 673. Glutamine 677 is modified (pyrrolidone carboxylic acid). 2 positions are modified to valine amide: valine 685 and valine 697. Glutamine 701 carries the pyrrolidone carboxylic acid modification. Valine amide is present on valine 709. Residue glutamine 713 is modified to Pyrrolidone carboxylic acid. Position 721 is a valine amide (valine 721). Residue glutamine 725 is modified to Pyrrolidone carboxylic acid. Residue valine 733 is modified to Valine amide. A propeptide spanning residues 734 to 837 is cleaved from the precursor; sequence GKRSGAEDID…DSHIMATSST (104 aa). The disordered stretch occupies residues 772–837; it reads GQPAAANEEE…DSHIMATSST (66 aa). Acidic residues predominate over residues 778 to 791; that stretch reads NEEELQQEAAEESE.

High expression in gut and CNS.

Its subcellular location is the secreted. Reduce interneurons B4/5 activity. May play a regulatory role in nonfeeding behaviors. This is Enterin neuropeptides (ENPP) from Aplysia californica (California sea hare).